Reading from the N-terminus, the 461-residue chain is Serine incorporator 5 (461 aa).

Topologically, residues 1–36 (MSARCCAGQLACCCGSAGCSLCCGCCPKFRQSRTTR) are extracellular. The chain crosses the membrane as a helical span at residues 37 to 57 (FMYLFYFILVIALCCVMMTPS). Residues 58-90 (VMKQVKDHIPFFEEFCKKTQAGGDACENLVGYS) are Cytoplasmic-facing. Residues 91–111 (AVYRVCFGMACFFALFCLLTL) form a helical membrane-spanning segment. Residues 112–125 (KVNNSKSCRAYIHN) are Extracellular-facing. An N-linked (GlcNAc...) asparagine glycan is attached at Asn-114. The helical transmembrane segment at 126–146 (GFWFFKLLLLGAMCSGAFFIP) threads the bilayer. The Cytoplasmic portion of the chain corresponds to 147-157 (DQETFLKVWRY). Residues 158-178 (VGAGGSFLFICIQLLLIVQFA) traverse the membrane as a helical segment. At 179–200 (HKWNKNWTAGTVRNKLWYASLS) the chain is on the extracellular side. The N-linked (GlcNAc...) asparagine glycan is linked to Asn-184. The helical transmembrane segment at 201 to 221 (LVTLIMYSVAVGGLALMAVFY) threads the bilayer. The Cytoplasmic segment spans residues 222–231 (TQWDDCMDNK). The helical transmembrane segment at 232 to 252 (ILLGVHGGLCVLISLVAISPC) threads the bilayer. Residues 253-260 (VQNRQPHS) lie on the Extracellular side of the membrane. Residues 261 to 281 (GLLQSGLISCYVTYLTFSALT) form a helical membrane-spanning segment. Topologically, residues 282–312 (SKPEKKVLDEHGKNVTICAPDFGQDLHRDEN) are cytoplasmic. A helical transmembrane segment spans residues 313 to 333 (MVTWLGTLLLIVCISYSCLTS). Residues 334–392 (TTRSSSDALQSRYGAPELEVARCCFCFGPDGEDTEEQQNVKKGPRVIYDEKKGTVYSYS) are Extracellular-facing. The chain crosses the membrane as a helical span at residues 393 to 413 (YFHFVFFLASLYVMMTLTSWF). At 414-422 (HYENATIKT) the chain is on the cytoplasmic side. The helical transmembrane segment at 423–443 (FFSGWSVFWVKMASCWMCVLL) threads the bilayer. Topologically, residues 444–461 (YLQTLVAPLCCPSRQFSV) are extracellular.

The protein belongs to the TDE1 family.

It is found in the cell membrane. It carries out the reaction a 1,2-diacyl-sn-glycero-3-phospho-L-serine(in) = a 1,2-diacyl-sn-glycero-3-phospho-L-serine(out). The enzyme catalyses a 1,2-diacyl-sn-glycero-3-phosphocholine(in) = a 1,2-diacyl-sn-glycero-3-phosphocholine(out). It catalyses the reaction a 1,2-diacyl-sn-glycero-3-phosphoethanolamine(in) = a 1,2-diacyl-sn-glycero-3-phosphoethanolamine(out). Functionally, restriction factor required to restrict infectivity of gammaretroviruses: acts by inhibiting an early step of viral infection. Impairs the penetration of the viral particle into the cytoplasm. Non-ATP-dependent, non-specific lipid transporter for phosphatidylserine, phosphatidylcholine, and phosphatidylethanolamine. Functions as a scramblase that flips lipids in both directions across the membrane. Phospholipid scrambling results in gammaretroviral surface exposure of phosphatidylserine and loss of membrane asymmetry, which leads to loss of infectivity. Enhances the incorporation of serine into phosphatidylserine and sphingolipids. May play a role in providing serine molecules for the formation of myelin glycosphingolipids in oligodendrocytes. The chain is Serine incorporator 5 (Serinc5) from Mus musculus (Mouse).